We begin with the raw amino-acid sequence, 325 residues long: NAD kinase (325 aa).

Aspartate 91 functions as the Proton acceptor in the catalytic mechanism. Residues 91-92 (DG), histidine 96, 165-166 (ND), histidine 176, histidine 193, aspartate 195, and 206-211 (TAYALS) each bind NAD(+).

Belongs to the NAD kinase family. A divalent metal cation is required as a cofactor.

The protein localises to the cytoplasm. The catalysed reaction is NAD(+) + ATP = ADP + NADP(+) + H(+). Functionally, involved in the regulation of the intracellular balance of NAD and NADP, and is a key enzyme in the biosynthesis of NADP. Catalyzes specifically the phosphorylation on 2'-hydroxyl of the adenosine moiety of NAD to yield NADP. This chain is NAD kinase, found in Psychrobacter arcticus (strain DSM 17307 / VKM B-2377 / 273-4).